A 184-amino-acid polypeptide reads, in one-letter code: H(2)/formate:CoB-CoM heterodisulfide,ferredoxin reductase subunit C2 (184 aa).

2 consecutive 4Fe-4S ferredoxin-type domains span residues 24-54 and 65-97; these read GEKE…AYRT and IDSV…TEII. Positions 34, 37, 40, 44, 77, 80, 83, and 87 each coordinate [4Fe-4S] cluster.

Belongs to the HdrC family. The heterodisulfide reductase is composed of three subunits; HdrA, HdrB and HdrC. B1 and B2 subunits are interchangeable, as are the C1 and C2 subunits. The heterodisulfide reductase forms a supercomplex with formylmethanofuran dehydrogenase (Fwd), F(420)-non-reducing hydrogenase (Vhu) and formate dehydrogenase (Fdh). [4Fe-4S] cluster serves as cofactor.

The enzyme catalyses coenzyme B + coenzyme M + 2 reduced [2Fe-2S]-[ferredoxin] + 2 H(+) = coenzyme M-coenzyme B heterodisulfide + 2 H2 + 2 oxidized [2Fe-2S]-[ferredoxin]. The catalysed reaction is coenzyme B + coenzyme M + 2 reduced [2Fe-2S]-[ferredoxin] + 2 CO2 = coenzyme M-coenzyme B heterodisulfide + 2 formate + 2 oxidized [2Fe-2S]-[ferredoxin]. The protein operates within cofactor metabolism; coenzyme M-coenzyme B heterodisulfide reduction; coenzyme B and coenzyme M from coenzyme M-coenzyme B heterodisulfide: step 1/1. Functionally, part of a complex that catalyzes the reversible reduction of CoM-S-S-CoB to the thiol-coenzymes H-S-CoM (coenzyme M) and H-S-CoB (coenzyme B). The sequence is that of H(2)/formate:CoB-CoM heterodisulfide,ferredoxin reductase subunit C2 from Methanococcus maripaludis (strain DSM 14266 / JCM 13030 / NBRC 101832 / S2 / LL).